Consider the following 34-residue polypeptide: Photosystem II reaction center protein M (34 aa).

A helical transmembrane segment spans residues 7–27 (GFVATLLFVLVPAIFLIILYI).

It belongs to the PsbM family. As to quaternary structure, PSII is composed of 1 copy each of membrane proteins PsbA, PsbB, PsbC, PsbD, PsbE, PsbF, PsbH, PsbI, PsbJ, PsbK, PsbL, PsbM, PsbT, PsbX, PsbY, PsbZ, Psb30/Ycf12, peripheral proteins PsbO, CyanoQ (PsbQ), PsbU, PsbV and a large number of cofactors. It forms dimeric complexes.

It is found in the cellular thylakoid membrane. Its function is as follows. One of the components of the core complex of photosystem II (PSII). PSII is a light-driven water:plastoquinone oxidoreductase that uses light energy to abstract electrons from H(2)O, generating O(2) and a proton gradient subsequently used for ATP formation. It consists of a core antenna complex that captures photons, and an electron transfer chain that converts photonic excitation into a charge separation. This subunit is found at the monomer-monomer interface. This is Photosystem II reaction center protein M from Synechococcus sp. (strain RCC307).